The primary structure comprises 241 residues: Phosphoribosylaminoimidazole-succinocarboxamide synthase (241 aa).

This sequence belongs to the SAICAR synthetase family.

The catalysed reaction is 5-amino-1-(5-phospho-D-ribosyl)imidazole-4-carboxylate + L-aspartate + ATP = (2S)-2-[5-amino-1-(5-phospho-beta-D-ribosyl)imidazole-4-carboxamido]succinate + ADP + phosphate + 2 H(+). It participates in purine metabolism; IMP biosynthesis via de novo pathway; 5-amino-1-(5-phospho-D-ribosyl)imidazole-4-carboxamide from 5-amino-1-(5-phospho-D-ribosyl)imidazole-4-carboxylate: step 1/2. The protein is Phosphoribosylaminoimidazole-succinocarboxamide synthase of Latilactobacillus sakei subsp. sakei (strain 23K) (Lactobacillus sakei subsp. sakei).